Reading from the N-terminus, the 577-residue chain is Aspartate--tRNA(Asp) ligase (577 aa).

Glutamate 172 provides a ligand contact to L-aspartate. The segment at 196-199 (QLFK) is aspartate. Arginine 218 contacts L-aspartate. ATP is bound by residues 218–220 (RDE) and glutamine 227. Histidine 438 serves as a coordination point for L-aspartate. Residue glutamate 473 participates in ATP binding. Arginine 480 lines the L-aspartate pocket. 525–528 (GFDR) contributes to the ATP binding site.

The protein belongs to the class-II aminoacyl-tRNA synthetase family. Type 1 subfamily. As to quaternary structure, homodimer.

The protein localises to the cytoplasm. The enzyme catalyses tRNA(Asp) + L-aspartate + ATP = L-aspartyl-tRNA(Asp) + AMP + diphosphate. In terms of biological role, catalyzes the attachment of L-aspartate to tRNA(Asp) in a two-step reaction: L-aspartate is first activated by ATP to form Asp-AMP and then transferred to the acceptor end of tRNA(Asp). Is specific for tRNA(Asp) since it cannot aspartylate tRNA(Asn). In Deinococcus radiodurans (strain ATCC 13939 / DSM 20539 / JCM 16871 / CCUG 27074 / LMG 4051 / NBRC 15346 / NCIMB 9279 / VKM B-1422 / R1), this protein is Aspartate--tRNA(Asp) ligase (aspS1).